A 180-amino-acid chain; its full sequence is MPHYILKKSFYEQSSLTVAGKLLGKKLLFNQHQGIITETEAYIGQDDPAAHSARGYTKRTSVMFGSPGFSYVYFIYGMYYCLNVVTEQEGFPAAVLIRGIVLLSENKPNTIINGPGKLCKILQITKEHNNTDITQKYNFCICNTDINIDNYICTPRIGISKGKEKFWRFVIPDLTFLLNV.

This sequence belongs to the DNA glycosylase MPG family.

The sequence is that of Putative 3-methyladenine DNA glycosylase from Ehrlichia chaffeensis (strain ATCC CRL-10679 / Arkansas).